The chain runs to 272 residues: 2-dehydro-3-deoxyphosphooctonate aldolase (272 aa).

This sequence belongs to the KdsA family.

The protein resides in the cytoplasm. The enzyme catalyses D-arabinose 5-phosphate + phosphoenolpyruvate + H2O = 3-deoxy-alpha-D-manno-2-octulosonate-8-phosphate + phosphate. It functions in the pathway carbohydrate biosynthesis; 3-deoxy-D-manno-octulosonate biosynthesis; 3-deoxy-D-manno-octulosonate from D-ribulose 5-phosphate: step 2/3. The protein operates within bacterial outer membrane biogenesis; lipopolysaccharide biosynthesis. This is 2-dehydro-3-deoxyphosphooctonate aldolase from Trichlorobacter lovleyi (strain ATCC BAA-1151 / DSM 17278 / SZ) (Geobacter lovleyi).